Consider the following 233-residue polypeptide: Cilia- and flagella-associated protein 299 (233 aa).

The protein localises to the cytoplasm. It is found in the nucleus. May be involved in spermatogenesis. This is Cilia- and flagella-associated protein 299 from Xenopus laevis (African clawed frog).